Reading from the N-terminus, the 522-residue chain is MKFELNGKIIFSKEITDDAKKDIIEVLNDRTILLKGVPTGKEEEASKIVNYEFKGNELILNIISGTYARAHEAIIRLKKPIMEKVGKIHKMGIRDIKIDNYEITINAPHNIDALENLKVPECETELNEEENTIKIIFKNIGDSELKRNIVDRAIKFVKTEIDNIGDSGEECDLTYEVCGIAPNTIVSEYKAERTISYNKDPTEESEKLGWVKRFSGKGQWFYTPPMTKLLRAFEELLMEECINKIGFDECLFPKLIPLEVMYKMRYLEGLPEGMYYVSPPKRDPEMFKEFVNEMMIKNEIPIHKLKDLLRNPGYVLAPAQCEPFYQFFDHELVDIDNPVKFVDKSGWTYRWEGGGSKGLDRVHEFLRIETVQMGAPEFVNSVRDDTLKYAEKLAEKLDLEYWTEVGDDPFYLEGRKKEERNIEFPEVPKYEMRLWLPHVKDERKGVAVTSANVHGTHFVEGFGVKDYKNRTVWTGCTGFGLSRWVIGFLAQYGFDYNDWPELIKDKIGEMPNIPKVITWPKK.

Position 319 (Ala-319) interacts with L-serine. Cys-321 is a Zn(2+) binding site. L-serine is bound at residue Arg-350. ATP-binding positions include Arg-350–Glu-352 and Arg-361–Val-362. Arg-367–Glu-369 contacts L-serine. Zn(2+) is bound by residues Glu-369 and Cys-476. Arg-483 is a binding site for ATP.

It belongs to the class-II aminoacyl-tRNA synthetase family. Type-2 seryl-tRNA synthetase subfamily. As to quaternary structure, homodimer. It depends on Zn(2+) as a cofactor.

It localises to the cytoplasm. It carries out the reaction tRNA(Ser) + L-serine + ATP = L-seryl-tRNA(Ser) + AMP + diphosphate + H(+). The catalysed reaction is tRNA(Sec) + L-serine + ATP = L-seryl-tRNA(Sec) + AMP + diphosphate + H(+). Its pathway is aminoacyl-tRNA biosynthesis; selenocysteinyl-tRNA(Sec) biosynthesis; L-seryl-tRNA(Sec) from L-serine and tRNA(Sec): step 1/1. Its function is as follows. Catalyzes the attachment of serine to tRNA(Ser). Is also able to aminoacylate tRNA(Sec) with serine, to form the misacylated tRNA L-seryl-tRNA(Sec), which will be further converted into selenocysteinyl-tRNA(Sec). The protein is Type-2 serine--tRNA ligase (serS) of Methanococcus aeolicus (strain ATCC BAA-1280 / DSM 17508 / OCM 812 / Nankai-3).